Reading from the N-terminus, the 142-residue chain is Large ribosomal subunit protein bL17 (142 aa).

It belongs to the bacterial ribosomal protein bL17 family. Part of the 50S ribosomal subunit. Contacts protein L32.

The protein is Large ribosomal subunit protein bL17 of Protochlamydia amoebophila (strain UWE25).